Consider the following 642-residue polypeptide: Threonine--tRNA ligase (642 aa).

The TGS domain occupies M1–T61. The catalytic stretch occupies residues D242–P535. The Zn(2+) site is built by C333, H384, and H512.

Belongs to the class-II aminoacyl-tRNA synthetase family. As to quaternary structure, homodimer. The cofactor is Zn(2+).

The protein resides in the cytoplasm. The catalysed reaction is tRNA(Thr) + L-threonine + ATP = L-threonyl-tRNA(Thr) + AMP + diphosphate + H(+). In terms of biological role, catalyzes the attachment of threonine to tRNA(Thr) in a two-step reaction: L-threonine is first activated by ATP to form Thr-AMP and then transferred to the acceptor end of tRNA(Thr). Also edits incorrectly charged L-seryl-tRNA(Thr). This Hydrogenovibrio crunogenus (strain DSM 25203 / XCL-2) (Thiomicrospira crunogena) protein is Threonine--tRNA ligase.